A 288-amino-acid polypeptide reads, in one-letter code: METSLKRAAAPAGAVAERTVLRNGGAVRDALAVEEPLEIRVDGERLATTMRTPGADGDLALGFLFAEGIIAGVEDVGTVIHCGRPGEEGYGNVMDVRSAAGMRIDPERVLEGRRFIPVSAACGVCGRLSIDHLMERLRPLPAGEPVPTALVAAGMETLARSQPVFERTGGLHAAVLVGRDGAPVASAEDVGRHNAVDKVVGAALRAGRVGPRAAAASAPALLAVSGRAGFEIVQKAAAAGVPVVASVSAPSSLAVDLARAAGVTLCGFVRGERMNVYANGERLGLTGP.

Cys-122 (cysteine persulfide intermediate) is an active-site residue. 268–273 contributes to the Mo-bis(molybdopterin guanine dinucleotide) binding site; that stretch reads FVRGER.

It belongs to the FdhD family.

It localises to the cytoplasm. Functionally, required for formate dehydrogenase (FDH) activity. Acts as a sulfur carrier protein that transfers sulfur from IscS to the molybdenum cofactor prior to its insertion into FDH. This is Sulfur carrier protein FdhD from Anaeromyxobacter dehalogenans (strain 2CP-C).